A 520-amino-acid chain; its full sequence is Sodium-dependent dicarboxylate transporter SdcS (520 aa).

The next 14 helical transmembrane spans lie at 30 to 50 (AGQLIGLILGPLLFLLTLLFF), 55 to 75 (LPWEGVYVLAITLWIATWWIT), 77 to 97 (AIPIAATSLLPIVLLPLGHIL), 104 to 124 (SEYGNDIIFLFLGGFILAIAM), 160 to 180 (SMFVSNTAAVMIMIPIGLAII), 207 to 227 (IGYAGTIGGLGTLIGTPPLII), 242 to 262 (FAKWMIVGIPTVIVLLGITWL), 298 to 318 (KVVQTIFVLASLLWITREFLL), 323 to 343 (VTSSVADGTIAIFISILLFVI), 362 to 382 (ELPWGVLILFGGGLALAKGIS), 399 to 419 (GVSPILIVIVITIFVLFLTEV), 428 to 448 (MILPILATLSVAVGVHPLLLM), 452 to 472 (AMAANCAYMLPVGTPPNAIIF), and 491 to 511 (LISAIIIILVVYYVMPIVLGI).

Belongs to the SLC13A/DASS transporter (TC 2.A.47) family. NADC subfamily.

Its subcellular location is the cell membrane. Functionally, mediates the transport of the dicarboxylates fumarate, malate, and succinate across the cytoplasmic membrane via a Na(+)-electrochemical gradient. The protein is Sodium-dependent dicarboxylate transporter SdcS (sdcS) of Staphylococcus aureus (strain bovine RF122 / ET3-1).